The primary structure comprises 446 residues: Argininosuccinate lyase (446 aa).

Belongs to the lyase 1 family. Argininosuccinate lyase subfamily.

It localises to the cytoplasm. The enzyme catalyses 2-(N(omega)-L-arginino)succinate = fumarate + L-arginine. It participates in amino-acid biosynthesis; L-arginine biosynthesis; L-arginine from L-ornithine and carbamoyl phosphate: step 3/3. The chain is Argininosuccinate lyase from Phocaeicola vulgatus (strain ATCC 8482 / DSM 1447 / JCM 5826 / CCUG 4940 / NBRC 14291 / NCTC 11154) (Bacteroides vulgatus).